The sequence spans 347 residues: Methylthioribose-1-phosphate isomerase (347 aa).

Residues 46 to 48 (RGA), arginine 89, and glutamine 196 contribute to the substrate site. Catalysis depends on aspartate 237, which acts as the Proton donor. Residue 247–248 (NK) participates in substrate binding.

The protein belongs to the eIF-2B alpha/beta/delta subunits family. MtnA subfamily.

It carries out the reaction 5-(methylsulfanyl)-alpha-D-ribose 1-phosphate = 5-(methylsulfanyl)-D-ribulose 1-phosphate. It functions in the pathway amino-acid biosynthesis; L-methionine biosynthesis via salvage pathway; L-methionine from S-methyl-5-thio-alpha-D-ribose 1-phosphate: step 1/6. Its function is as follows. Catalyzes the interconversion of methylthioribose-1-phosphate (MTR-1-P) into methylthioribulose-1-phosphate (MTRu-1-P). The polypeptide is Methylthioribose-1-phosphate isomerase (Chloroflexus aurantiacus (strain ATCC 29366 / DSM 635 / J-10-fl)).